The following is a 145-amino-acid chain: D-aminoacyl-tRNA deacylase (145 aa).

The Gly-cisPro motif, important for rejection of L-amino acids motif lies at 137 to 138 (GP).

Belongs to the DTD family. In terms of assembly, homodimer.

Its subcellular location is the cytoplasm. The catalysed reaction is glycyl-tRNA(Ala) + H2O = tRNA(Ala) + glycine + H(+). The enzyme catalyses a D-aminoacyl-tRNA + H2O = a tRNA + a D-alpha-amino acid + H(+). Functionally, an aminoacyl-tRNA editing enzyme that deacylates mischarged D-aminoacyl-tRNAs. Also deacylates mischarged glycyl-tRNA(Ala), protecting cells against glycine mischarging by AlaRS. Acts via tRNA-based rather than protein-based catalysis; rejects L-amino acids rather than detecting D-amino acids in the active site. By recycling D-aminoacyl-tRNA to D-amino acids and free tRNA molecules, this enzyme counteracts the toxicity associated with the formation of D-aminoacyl-tRNA entities in vivo and helps enforce protein L-homochirality. The polypeptide is D-aminoacyl-tRNA deacylase (Ruegeria pomeroyi (strain ATCC 700808 / DSM 15171 / DSS-3) (Silicibacter pomeroyi)).